A 350-amino-acid polypeptide reads, in one-letter code: Homeobox-leucine zipper protein HOX5 (350 aa).

The homeobox DNA-binding region spans 83–142 (APEKKRRLTAEQVQMLERSFEEENKLEPERKTELARRLGMAPRQVAVWFQNRRARWKTKQ). Residues 141–185 (KQLEHDFDRLKAAYDALAADHHALLSDNDRLRAQVISLTEKLQDK) form a leucine-zipper region. Positions 180–254 (EKLQDKETSP…TNDDGDGGGA (75 aa)) are disordered. The segment covering 188–198 (SPSSATITTAA) has biased composition (low complexity).

It belongs to the HD-ZIP homeobox family. Class I subfamily. In terms of assembly, homodimer. May form a heterodimer with HOX4. Expressed in seedlings, roots, leaves, nodes, internodes, flowers and embryo.

The protein resides in the nucleus. In terms of biological role, probable transcription activator that binds to the DNA sequence 5'-CAAT[AT]ATTG-3'. The chain is Homeobox-leucine zipper protein HOX5 (HOX5) from Oryza sativa subsp. indica (Rice).